Reading from the N-terminus, the 425-residue chain is Histidine--tRNA ligase (425 aa).

This sequence belongs to the class-II aminoacyl-tRNA synthetase family. In terms of assembly, homodimer.

Its subcellular location is the cytoplasm. The catalysed reaction is tRNA(His) + L-histidine + ATP = L-histidyl-tRNA(His) + AMP + diphosphate + H(+). The sequence is that of Histidine--tRNA ligase from Erwinia tasmaniensis (strain DSM 17950 / CFBP 7177 / CIP 109463 / NCPPB 4357 / Et1/99).